A 382-amino-acid chain; its full sequence is Aminotransferase FGSG_00049 (382 aa).

Arg80 contacts pyridoxal 5'-phosphate. N6-(pyridoxal phosphate)lysine is present on Lys181. Residue Glu217 coordinates pyridoxal 5'-phosphate.

It belongs to the class-IV pyridoxal-phosphate-dependent aminotransferase family. Pyridoxal 5'-phosphate serves as cofactor.

Its pathway is mycotoxin biosynthesis. In terms of biological role, aminotransferase; part of the gene cluster that mediates the biosynthesis of gramillins A and B, bicyclic lipopeptides that induce cell death in maize leaves but not in wheat leaves. The nonribosomal peptide synthetase GRA1 incorporates respectively a glutamic adic (Glu), a leucine (Leu), a serine (Ser), a hydroxyglutamine (HOGln), a 2-amino decanoic acid, and 2 cysteins (CysB and CysA). The biosynthesis of 2-amino decanoic acid incorporated in gramillins could be initiated by a fatty acid synthase composed of the alpha and beta subunits FGSG_00036 and FGSG_11656. The cytochrome P450 monooxygenase FGSG_15680 could hydroxylate the fatty acid chain. Subsequent oxidation to the ketone by the oxidoreductase FGSG_00048 and transamination by aminotransferase FGSG_00049 could form 2-amino-decanoic acid. On the other hand, FGSG_15680 could also be responsible for the HO-modified glutamine at the gamma-position. Whether hydroxylation occurs on the fully assembled product or on the Gln residue prior to assembly into the gramillins requires further proof. The thioredoxin FGSG_00043 could also be required for the disulfide-bond formation between CysA and CysB. The specific involvement of the remaining proteins from the cluster is more difficult to discern, but could have broader regulatory (FGSG_00040 and FGSG_11657) or enzymatic functions (FGSG_00044 and FGSG_00045). The final C-domain of GRA1 does not possess the expected sequence of a termination CT domain, often implicated in macrocyclization and release of a cyclopeptidein fungal NRPs; and the thioesterase FGSG_00047 may act in concert with the terminal C-domain of GRA1 to catalyze the formation of the macrocyclic anhydride and release of the products. This chain is Aminotransferase FGSG_00049, found in Gibberella zeae (strain ATCC MYA-4620 / CBS 123657 / FGSC 9075 / NRRL 31084 / PH-1) (Wheat head blight fungus).